Here is a 1252-residue protein sequence, read N- to C-terminus: Myosin-3 (1252 aa).

Residues Val-36–Asp-715 enclose the Myosin motor domain. Residue Gly-129–Thr-136 coordinates ATP. Ser-357 carries the post-translational modification Phosphoserine. The interval Ser-404 to Ala-486 is actin-binding. 2 consecutive IQ domains span residues Tyr-719 to Ala-739 and Ala-740 to Lys-767. In terms of domain architecture, TH1 spans Lys-773 to Pro-963. Disordered regions lie at residues Lys-988–Val-1086, Tyr-1106–Leu-1136, and Ile-1203–Trp-1252. Positions Lys-997–Ala-1016 are enriched in low complexity. Composition is skewed to polar residues over residues Pro-1050–Val-1063, Tyr-1106–Tyr-1121, and Ile-1203–Leu-1219. Positions Ser-1116–Gly-1178 constitute an SH3 domain. Residues Ser-1238–Trp-1252 are compositionally biased toward acidic residues.

The protein belongs to the TRAFAC class myosin-kinesin ATPase superfamily. Myosin family. Phosphorylation of the TEDS site (Ser-357) is required for the polarization of the actin cytoskeleton. Phosphorylation probably activates the myosin-I ATPase activity.

The protein localises to the cytoplasm. It localises to the cytoskeleton. It is found in the actin patch. In terms of biological role, type-I myosin implicated in the organization of the actin cytoskeleton. Required for proper actin cytoskeleton polarization. At the cell cortex, assembles in patch-like structures together with proteins from the actin-polymerizing machinery and promotes actin assembly. Functions as actin nucleation-promoting factor (NPF) for the Arp2/3 complex. This chain is Myosin-3 (MYO3), found in Candida glabrata (strain ATCC 2001 / BCRC 20586 / JCM 3761 / NBRC 0622 / NRRL Y-65 / CBS 138) (Yeast).